The chain runs to 246 residues: Isoamyl acetate-hydrolyzing esterase (246 aa).

Catalysis depends on Ser-46, which acts as the Nucleophile. Asp-201 acts as the Proton donor in catalysis. His-204 (proton acceptor) is an active-site residue.

This sequence belongs to the 'GDSL' lipolytic enzyme family. IAH1 subfamily.

The protein localises to the cytoplasm. The enzyme catalyses 3-methylbutyl acetate + H2O = 3-methylbutanol + acetate + H(+). The protein is Isoamyl acetate-hydrolyzing esterase (iah1) of Schizosaccharomyces pombe (strain 972 / ATCC 24843) (Fission yeast).